The following is a 174-amino-acid chain: Membrane protein NfeD2 (174 aa).

3 helical membrane passes run 16 to 36, 47 to 67, and 72 to 92; these read LIIA…FSGL, LVLS…LVLP, and LIAL…HIFV.

It belongs to the NfeD family.

Its subcellular location is the cell membrane. The protein localises to the membrane raft. In terms of biological role, plays a role in assembly of FloT membrane rafts, probably recruited to rafts by FloT. In Bacillus subtilis (strain 168), this protein is Membrane protein NfeD2.